We begin with the raw amino-acid sequence, 251 residues long: Imidazole glycerol phosphate synthase subunit HisF (251 aa).

Active-site residues include Asp-12 and Asp-131.

This sequence belongs to the HisA/HisF family. As to quaternary structure, heterodimer of HisH and HisF.

The protein resides in the cytoplasm. The catalysed reaction is 5-[(5-phospho-1-deoxy-D-ribulos-1-ylimino)methylamino]-1-(5-phospho-beta-D-ribosyl)imidazole-4-carboxamide + L-glutamine = D-erythro-1-(imidazol-4-yl)glycerol 3-phosphate + 5-amino-1-(5-phospho-beta-D-ribosyl)imidazole-4-carboxamide + L-glutamate + H(+). Its pathway is amino-acid biosynthesis; L-histidine biosynthesis; L-histidine from 5-phospho-alpha-D-ribose 1-diphosphate: step 5/9. IGPS catalyzes the conversion of PRFAR and glutamine to IGP, AICAR and glutamate. The HisF subunit catalyzes the cyclization activity that produces IGP and AICAR from PRFAR using the ammonia provided by the HisH subunit. This is Imidazole glycerol phosphate synthase subunit HisF from Helicobacter hepaticus (strain ATCC 51449 / 3B1).